A 106-amino-acid chain; its full sequence is Large ribosomal subunit protein eL42 (106 aa).

It belongs to the eukaryotic ribosomal protein eL42 family.

The sequence is that of Large ribosomal subunit protein eL42 (RPL44) from Yarrowia lipolytica (strain CLIB 122 / E 150) (Yeast).